A 143-amino-acid polypeptide reads, in one-letter code: MKSYMARPGEVERKWYVIDAEGKTLGRLAAEISRLLRGKNKPQYTPHVDVGDFVVVVNADKVEVTGRKAEQKVYRWHTGYPGGLRERSYRQMLRKRPEEILRQAVRGMMPKTRLARRQLKKLRIYAGPEHPHAGQTPEPYEVR.

This sequence belongs to the universal ribosomal protein uL13 family. In terms of assembly, part of the 50S ribosomal subunit.

Functionally, this protein is one of the early assembly proteins of the 50S ribosomal subunit, although it is not seen to bind rRNA by itself. It is important during the early stages of 50S assembly. In Rubrobacter xylanophilus (strain DSM 9941 / JCM 11954 / NBRC 16129 / PRD-1), this protein is Large ribosomal subunit protein uL13.